The sequence spans 670 residues: Solute carrier organic anion transporter family member 1A6 (670 aa).

At 1–20 (MGEPEKRAGTHGIRCFAKIK) the chain is on the cytoplasmic side. Residues 21-40 (VFLLALTWAYASKALSATYM) traverse the membrane as a helical segment. The Extracellular segment spans residues 41 to 59 (NSMLTQIERRFNISTSIVG). The N-linked (GlcNAc...) asparagine glycan is linked to Asn-52. A helical membrane pass occupies residues 60 to 80 (LINGSFEVGNLLLIIFVSYFG). Residues 81–86 (RKRHRP) lie on the Cytoplasmic side of the membrane. Residues 87 to 111 (IMIGIGCAVMGLGCFIISLPHFLMG) traverse the membrane as a helical segment. The Extracellular segment spans residues 112 to 155 (RYEYETTISPTSNLSSNSFLCMENRTQTLKPTQDPAECVKEMKS). N-linked (GlcNAc...) asparagine glycans are attached at residues Asn-124 and Asn-135. The helical transmembrane segment at 156–184 (LMWIYVLVGNIIRGIGETPIMPLGISYIE) threads the bilayer. Residues 185 to 203 (DFAKSENSPFYIGILEVGK) lie on the Cytoplasmic side of the membrane. A helical membrane pass occupies residues 204 to 224 (ITGPIAAIWLGSFCATIYVDM). Over 225–242 (GSVNTDDLTITPTDTRCV) the chain is Extracellular. The chain crosses the membrane as a helical span at residues 243–267 (GAWWIGFLVCAGLNILISIPFFFFP). At 268-311 (KTFPKEGPEDMANETKNDEGDKHREKAKEEKRGITKDFFLFMKS) the chain is on the cytoplasmic side. The disordered stretch occupies residues 276-295 (EDMANETKNDEGDKHREKAK). Residues 312 to 333 (LSCNPIYMLCVLTSVLQVNGFV) form a helical membrane-spanning segment. At 334–353 (SIFTFKPKYLEHHYGKSSSE) the chain is on the extracellular side. Residues 354-377 (AIFLMGLYTLPSVCVGYLISGFIM) form a helical membrane-spanning segment. Residues 378–381 (KKFK) lie on the Cytoplasmic side of the membrane. Residues 382–405 (ITLKKAAFISYCLGMSECLLSLCN) form a helical membrane-spanning segment. The Extracellular portion of the chain corresponds to 406–513 (FMLTCDNVPI…PDCANKLQYF (108 aa)). One can recognise a Kazal-like domain in the interval 433–488 (NTVLADCNTRCSCLTKTWDPVCGDNGLAYITPCLAGCEKSVGSGINMVLQDCSCIQ). 3 disulfide bridges follow: Cys-439–Cys-469, Cys-445–Cys-465, and Cys-454–Cys-486. N-linked (GlcNAc...) asparagine glycosylation occurs at Asn-492. A helical membrane pass occupies residues 514–536 (LIITVFCSFFYSLSLIPGYMIFL). The Cytoplasmic portion of the chain corresponds to 537–545 (RCMKSEEKS). A helical membrane pass occupies residues 546–571 (LGIGLQAFCMRILGGILAPIYFGVLI). Residues 572–605 (DRTCLHWGTQKCGEPGACRTYEINSFRSIYLGLP) are Extracellular-facing. A helical membrane pass occupies residues 606 to 623 (AALRGSSYLPAFFILRLM). Residues 624–670 (RKFQFPGDINSPVTDHVEMMLTEKESEHTDVHRSPQVENDGELKTKL) lie on the Cytoplasmic side of the membrane. Phosphoserine is present on Ser-634. The tract at residues 647 to 670 (KESEHTDVHRSPQVENDGELKTKL) is disordered.

It belongs to the organo anion transporter (TC 2.A.60) family.

It localises to the cell membrane. Its function is as follows. May mediate the Na(+)-independent transport of organic anions. This is Solute carrier organic anion transporter family member 1A6 (Slco1a6) from Rattus norvegicus (Rat).